The sequence spans 265 residues: Apolipoprotein A-I (265 aa).

A signal peptide spans 1-16; that stretch reads MKAAVLIWLFLMGSQA. 2 repeat units span residues 66 to 87 and 88 to 109. The tract at residues 66 to 265 is 10 X approximate tandem repeats; sequence LKLLDNWDSL…EEYTKKLSSQ (200 aa). At Met108 the chain carries Methionine sulfoxide. Residues 110 to 120 form a 3; half-length repeat; sequence KDLEEVKAQVQ. Repeat copies occupy residues 121–142, 143–164, 165–186, 187–208, and 209–230. Residue Met134 is modified to Methionine sulfoxide. A 9; half-length repeat occupies 231–241; it reads PALDDLRQGLL. Copy 10 of the repeat occupies 242-265; the sequence is PVLESFKVSFLSALEEYTKKLSSQ.

This sequence belongs to the apolipoprotein A1/A4/E family. As to quaternary structure, homodimer. Interacts with APOA1BP and CLU. Component of a sperm activating protein complex (SPAP), consisting of APOA1, an immunoglobulin heavy chain, an immunoglobulin light chain and albumin. Interacts with NDRG1. Interacts with SCGB3A2. Interacts with NAXE and YJEFN3. In terms of processing, glycosylated. Palmitoylated. Post-translationally, phosphorylation sites are present in the extracellular medium.

The protein localises to the secreted. Functionally, participates in the reverse transport of cholesterol from tissues to the liver for excretion by promoting cholesterol efflux from tissues and by acting as a cofactor for the lecithin cholesterol acyltransferase (LCAT). As part of the SPAP complex, activates spermatozoa motility. This is Apolipoprotein A-I (APOA1) from Aotus nancymaae (Ma's night monkey).